The chain runs to 44 residues: Phycoerythrin alpha-1 chain (44 aa).

A disordered region spans residues A1–V44. Position 4 is a 5-hydroxylysine (K4). Residues C19 and R21 each contribute to the 15,16-dihydrobiliverdin site. The interval K24 to E26 is 15,16-dihydrobiliverdin chromophore. K40 serves as a coordination point for 15,16-dihydrobiliverdin.

Belongs to the phycoerythrin family. Heterotetramer of 2 different alpha chains and 2 identical beta chains. The subunit composition could comprise of any combination of 2 out of 4 different alpha units with an invariant beta unit. Contains one covalently linked 15,16-dihydrobiliverdin chromophore.

It is found in the plastid. It localises to the chloroplast thylakoid membrane. In terms of biological role, light-harvesting photosynthetic tetrapyrrole chromophore-protein from the phycobiliprotein complex. The sequence is that of Phycoerythrin alpha-1 chain (cpeA1) from Rhodomonas sp. (strain CS 24) (Chroomonas sp. (strain CS24)).